Here is a 130-residue protein sequence, read N- to C-terminus: Odontogenesis associated phosphoprotein (130 aa).

Residues 1–23 (MARRHCFSYWLLVCWLVVTVAEG) form the signal peptide.

Highly expressed in placenta.

It is found in the secreted. In terms of biological role, may promote nucleation of hydroxyapatite. This chain is Odontogenesis associated phosphoprotein, found in Homo sapiens (Human).